Consider the following 161-residue polypeptide: Protein-export protein SecB (161 aa).

The protein belongs to the SecB family. As to quaternary structure, homotetramer, a dimer of dimers. One homotetramer interacts with 1 SecA dimer.

The protein localises to the cytoplasm. One of the proteins required for the normal export of preproteins out of the cell cytoplasm. It is a molecular chaperone that binds to a subset of precursor proteins, maintaining them in a translocation-competent state. It also specifically binds to its receptor SecA. This chain is Protein-export protein SecB, found in Methylocella silvestris (strain DSM 15510 / CIP 108128 / LMG 27833 / NCIMB 13906 / BL2).